A 146-amino-acid polypeptide reads, in one-letter code: Histone H2A.1 (146 aa).

At methionine 1 the chain carries N-acetylmethionine. Positions methionine 1 to lysine 24 are disordered. Positions serine 142–lysine 145 match the SPKK motif motif.

It belongs to the histone H2A family. As to quaternary structure, the nucleosome is a histone octamer containing two molecules each of H2A, H2B, H3 and H4 assembled in one H3-H4 heterotetramer and two H2A-H2B heterodimers. The octamer wraps approximately 147 bp of DNA. In terms of tissue distribution, high expression in meristematic tissues, in cells of the root pericycle and in shoot cortical cells undergoing endoduplication of their DNA.

The protein localises to the nucleus. It is found in the chromosome. Functionally, core component of nucleosome. Nucleosomes wrap and compact DNA into chromatin, limiting DNA accessibility to the cellular machineries which require DNA as a template. Histones thereby play a central role in transcription regulation, DNA repair, DNA replication and chromosomal stability. DNA accessibility is regulated via a complex set of post-translational modifications of histones, also called histone code, and nucleosome remodeling. This Solanum lycopersicum (Tomato) protein is Histone H2A.1.